A 260-amino-acid chain; its full sequence is Snake venom serine protease KN14 (260 aa).

The signal sequence occupies residues 1–18 (MVLIRVLANLLILQLSYA). Positions 19 to 24 (QKSSEL) are excised as a propeptide. The 227-residue stretch at 25-251 (VIGGDECNIN…HLDWIQSIIA (227 aa)) folds into the Peptidase S1 domain. 5 disulfide bridges follow: Cys-31-Cys-165, Cys-100-Cys-258, Cys-144-Cys-212, Cys-176-Cys-191, and Cys-202-Cys-227. The Charge relay system role is filled by His-67. N-linked (GlcNAc...) asparagine glycosylation is present at Asn-105. The active-site Charge relay system is the Asp-112. Asn-172 carries N-linked (GlcNAc...) asparagine glycosylation. The active-site Charge relay system is Ser-206. Residues Asn-213 and Asn-255 are each glycosylated (N-linked (GlcNAc...) asparagine).

The protein belongs to the peptidase S1 family. Snake venom subfamily. Monomer. Expressed by the venom gland.

It is found in the secreted. In terms of biological role, snake venom serine protease that may act in the hemostasis system of the prey. The chain is Snake venom serine protease KN14 from Trimeresurus stejnegeri (Chinese green tree viper).